A 512-amino-acid polypeptide reads, in one-letter code: ATP synthase subunit alpha (512 aa).

An ATP-binding site is contributed by 169 to 176 (GDRQTGKT).

This sequence belongs to the ATPase alpha/beta chains family. As to quaternary structure, F-type ATPases have 2 components, CF(1) - the catalytic core - and CF(0) - the membrane proton channel. CF(1) has five subunits: alpha(3), beta(3), gamma(1), delta(1), epsilon(1). CF(0) has three main subunits: a(1), b(2) and c(9-12). The alpha and beta chains form an alternating ring which encloses part of the gamma chain. CF(1) is attached to CF(0) by a central stalk formed by the gamma and epsilon chains, while a peripheral stalk is formed by the delta and b chains.

It is found in the cell membrane. It carries out the reaction ATP + H2O + 4 H(+)(in) = ADP + phosphate + 5 H(+)(out). Functionally, produces ATP from ADP in the presence of a proton gradient across the membrane. The alpha chain is a regulatory subunit. The polypeptide is ATP synthase subunit alpha (Buchnera aphidicola subsp. Acyrthosiphon pisum (strain Tuc7)).